A 237-amino-acid polypeptide reads, in one-letter code: 1-(5-phosphoribosyl)-5-[(5-phosphoribosylamino)methylideneamino] imidazole-4-carboxamide isomerase (237 aa).

D8 serves as the catalytic Proton acceptor. The Proton donor role is filled by D129.

The protein belongs to the HisA/HisF family.

The protein localises to the cytoplasm. It carries out the reaction 1-(5-phospho-beta-D-ribosyl)-5-[(5-phospho-beta-D-ribosylamino)methylideneamino]imidazole-4-carboxamide = 5-[(5-phospho-1-deoxy-D-ribulos-1-ylimino)methylamino]-1-(5-phospho-beta-D-ribosyl)imidazole-4-carboxamide. Its pathway is amino-acid biosynthesis; L-histidine biosynthesis; L-histidine from 5-phospho-alpha-D-ribose 1-diphosphate: step 4/9. This is 1-(5-phosphoribosyl)-5-[(5-phosphoribosylamino)methylideneamino] imidazole-4-carboxamide isomerase from Methanosphaera stadtmanae (strain ATCC 43021 / DSM 3091 / JCM 11832 / MCB-3).